The chain runs to 299 residues: F-actin-capping protein subunit alpha-3 (299 aa).

Residues Ser2 and Ser290 each carry the phosphoserine modification.

It belongs to the F-actin-capping protein alpha subunit family. As to quaternary structure, component of the F-actin capping complex, composed of a heterodimer of an alpha and a beta subunit. Component of the WASH complex, composed of F-actin-capping protein subunit alpha (CAPZA1, CAPZA2 or CAPZA3), F-actin-capping protein subunit beta (CAPZB), WASHC1, WASHC2, WASHC3, WASHC4 and WASHC5. In terms of tissue distribution, exclusively expressed in the testis.

The protein resides in the cytoplasm. The protein localises to the cytoskeleton. Its function is as follows. F-actin-capping proteins bind in a Ca(2+)-independent manner to the fast growing ends of actin filaments (barbed end) thereby blocking the exchange of subunits at these ends. Unlike other capping proteins (such as gelsolin and severin), these proteins do not sever actin filaments. May play a role in the morphogenesis of spermatid. The sequence is that of F-actin-capping protein subunit alpha-3 (Capza3) from Rattus norvegicus (Rat).